A 462-amino-acid polypeptide reads, in one-letter code: Glycine--tRNA ligase (462 aa).

Substrate contacts are provided by Arg-100 and Glu-174. Residues 206–208, 216–221, 290–291, and 334–337 contribute to the ATP site; these read RNE, FRTREF, EL, and GADR. 221–225 is a binding site for substrate; the sequence is FEQME. Residue 330–334 participates in substrate binding; it reads EPSLG.

It belongs to the class-II aminoacyl-tRNA synthetase family. In terms of assembly, homodimer.

The protein localises to the cytoplasm. The catalysed reaction is tRNA(Gly) + glycine + ATP = glycyl-tRNA(Gly) + AMP + diphosphate. In terms of biological role, catalyzes the attachment of glycine to tRNA(Gly). The polypeptide is Glycine--tRNA ligase (Alkaliphilus metalliredigens (strain QYMF)).